The following is an 824-amino-acid chain: Protein-glutamine gamma-glutamyltransferase K (824 aa).

Residues Met-1–Arg-10 are compositionally biased toward basic and acidic residues. 2 disordered regions span residues Met-1–Ser-44 and Asp-61–Asp-110. The residue at position 20 (Thr-20) is a Phosphothreonine. Phosphoserine is present on residues Ser-22, Ser-70, Ser-92, Ser-100, and Ser-103. Over residues Pro-65–Ser-76 the composition is skewed to low complexity. Residues Gly-85 to Ser-100 show a composition bias toward basic and acidic residues. Active-site residues include Cys-385, His-444, and Asp-467. 4 residues coordinate Ca(2+): Asn-507, Asp-509, Glu-556, and Glu-561. Positions Arg-801–Ala-824 are disordered. Position 812 is a phosphoserine (Ser-812).

Belongs to the transglutaminase superfamily. Transglutaminase family. In terms of assembly, interacts with PLAAT4. It depends on Ca(2+) as a cofactor. Post-translationally, palmitoylated. The membrane anchorage region possesses a cluster of five cysteines within which fatty acid(s) may become thioester-linked. It is subject to phorbol ester-stimulated phosphorylation and is hypersensitive to proteolysis, which releases the enzyme in a soluble form. In terms of processing, tyrosine-phosphorylated.

It is found in the membrane. The catalysed reaction is L-glutaminyl-[protein] + L-lysyl-[protein] = [protein]-L-lysyl-N(6)-5-L-glutamyl-[protein] + NH4(+). Catalyzes the cross-linking of proteins and the conjugation of polyamines to proteins. Responsible for cross-linking epidermal proteins during formation of the stratum corneum. Involved in cell proliferation. The polypeptide is Protein-glutamine gamma-glutamyltransferase K (Tgm1) (Rattus norvegicus (Rat)).